The following is a 201-amino-acid chain: Holliday junction branch migration complex subunit RuvA (201 aa).

The domain I stretch occupies residues 1-64 (MIGRLHGKII…EDAHLLFGFA (64 aa)). The domain II stretch occupies residues 65 to 143 (QKQDRTLFRE…GVAQSDFFEE (79 aa)). The flexible linker stretch occupies residues 144–154 (HSVETIVATHS). Residues 154 to 201 (SHDPADEARDALVALGYKLADAEKMIKKVNKAGATSEQLIREALKASL) are domain III.

It belongs to the RuvA family. As to quaternary structure, homotetramer. Forms an RuvA(8)-RuvB(12)-Holliday junction (HJ) complex. HJ DNA is sandwiched between 2 RuvA tetramers; dsDNA enters through RuvA and exits via RuvB. An RuvB hexamer assembles on each DNA strand where it exits the tetramer. Each RuvB hexamer is contacted by two RuvA subunits (via domain III) on 2 adjacent RuvB subunits; this complex drives branch migration. In the full resolvosome a probable DNA-RuvA(4)-RuvB(12)-RuvC(2) complex forms which resolves the HJ.

The protein resides in the cytoplasm. Its function is as follows. The RuvA-RuvB-RuvC complex processes Holliday junction (HJ) DNA during genetic recombination and DNA repair, while the RuvA-RuvB complex plays an important role in the rescue of blocked DNA replication forks via replication fork reversal (RFR). RuvA specifically binds to HJ cruciform DNA, conferring on it an open structure. The RuvB hexamer acts as an ATP-dependent pump, pulling dsDNA into and through the RuvAB complex. HJ branch migration allows RuvC to scan DNA until it finds its consensus sequence, where it cleaves and resolves the cruciform DNA. This Actinobacillus pleuropneumoniae serotype 7 (strain AP76) protein is Holliday junction branch migration complex subunit RuvA.